We begin with the raw amino-acid sequence, 469 residues long: Adenosylhomocysteinase (469 aa).

Substrate is bound by residues Thr60, Asp135, and Glu195. NAD(+) is bound at residue 196-198 (TTT). Residues Lys225 and Asp229 each coordinate substrate. NAD(+)-binding positions include Asn230, 259 to 264 (GYGDVG), Glu282, Asn317, 338 to 340 (IGH), and Asn383.

It belongs to the adenosylhomocysteinase family. NAD(+) serves as cofactor.

It is found in the cytoplasm. It carries out the reaction S-adenosyl-L-homocysteine + H2O = L-homocysteine + adenosine. The protein operates within amino-acid biosynthesis; L-homocysteine biosynthesis; L-homocysteine from S-adenosyl-L-homocysteine: step 1/1. In terms of biological role, may play a key role in the regulation of the intracellular concentration of adenosylhomocysteine. The sequence is that of Adenosylhomocysteinase from Hyphomonas neptunium (strain ATCC 15444).